A 326-amino-acid polypeptide reads, in one-letter code: Methionyl-tRNA formyltransferase (326 aa).

Residue 110 to 113 participates in (6S)-5,6,7,8-tetrahydrofolate binding; sequence SLLP. The tract at residues 307–326 is disordered; it reads VGTRFSPPEAPQREPAPGEA.

The protein belongs to the Fmt family.

It catalyses the reaction L-methionyl-tRNA(fMet) + (6R)-10-formyltetrahydrofolate = N-formyl-L-methionyl-tRNA(fMet) + (6S)-5,6,7,8-tetrahydrofolate + H(+). Its function is as follows. Attaches a formyl group to the free amino group of methionyl-tRNA(fMet). The formyl group appears to play a dual role in the initiator identity of N-formylmethionyl-tRNA by promoting its recognition by IF2 and preventing the misappropriation of this tRNA by the elongation apparatus. The protein is Methionyl-tRNA formyltransferase of Symbiobacterium thermophilum (strain DSM 24528 / JCM 14929 / IAM 14863 / T).